The chain runs to 297 residues: Zinc finger protein 784 (297 aa).

Residues 1 to 12 (MAAARPDPPIPS) are compositionally biased toward pro residues. Residues 1–39 (MAAARPDPPIPSSPTRESPSPEPPDLVLVPDGRPVTPPG) form a disordered region. S13 is modified (phosphoserine). C2H2-type zinc fingers lie at residues 64 to 86 (FHCALCPAAFRLVSELLFHEHGH), 100 to 122 (SRCHVCGHSCPGPASLRAHYSLH), and 128 to 150 (YRCSLCPRAFKALAPLLRHQHRH). The segment at 149–175 (RHGVEPGTSERLLPTTTTGQPNSRVAQ) is disordered. A compositionally biased stretch (polar residues) spans 162–173 (PTTTTGQPNSRV). C2H2-type zinc fingers lie at residues 195 to 217 (FACRFCAKPFRRSSDMRDHERVH), 223 to 245 (YHCSICGKGFTQSSVLSGHARIH), and 251 to 273 (FRCMLCDRTFNNSSNFRKHQRTH). The tract at residues 268–297 (KHQRTHFHGPGSGVGESRGQLRSSSVSQES) is disordered. Polar residues predominate over residues 287–297 (QLRSSSVSQES).

This sequence belongs to the krueppel C2H2-type zinc-finger protein family.

The protein resides in the nucleus. May be involved in transcriptional regulation. The protein is Zinc finger protein 784 (Znf784) of Mus musculus (Mouse).